A 251-amino-acid polypeptide reads, in one-letter code: HTH-type transcriptional regulator UlaR (251 aa).

In terms of domain architecture, HTH deoR-type spans Glu3–Ala58. The H-T-H motif DNA-binding region spans Val20 to Asp39.

The protein resides in the cytoplasm. Its function is as follows. Represses ulaG and the ulaABCDEF operon. This Shigella sonnei (strain Ss046) protein is HTH-type transcriptional regulator UlaR.